The following is a 425-amino-acid chain: Glutamate-1-semialdehyde 2,1-aminomutase (425 aa).

An N6-(pyridoxal phosphate)lysine modification is found at lysine 265.

Belongs to the class-III pyridoxal-phosphate-dependent aminotransferase family. HemL subfamily. In terms of assembly, homodimer. The cofactor is pyridoxal 5'-phosphate.

The protein resides in the cytoplasm. It carries out the reaction (S)-4-amino-5-oxopentanoate = 5-aminolevulinate. It participates in porphyrin-containing compound metabolism; protoporphyrin-IX biosynthesis; 5-aminolevulinate from L-glutamyl-tRNA(Glu): step 2/2. The chain is Glutamate-1-semialdehyde 2,1-aminomutase from Chromobacterium violaceum (strain ATCC 12472 / DSM 30191 / JCM 1249 / CCUG 213 / NBRC 12614 / NCIMB 9131 / NCTC 9757 / MK).